A 270-amino-acid chain; its full sequence is Putative pyruvate, phosphate dikinase regulatory protein (270 aa).

147-154 is an ADP binding site; the sequence is GVSRSSKT.

Belongs to the pyruvate, phosphate/water dikinase regulatory protein family. PDRP subfamily.

It catalyses the reaction N(tele)-phospho-L-histidyl/L-threonyl-[pyruvate, phosphate dikinase] + ADP = N(tele)-phospho-L-histidyl/O-phospho-L-threonyl-[pyruvate, phosphate dikinase] + AMP + H(+). It carries out the reaction N(tele)-phospho-L-histidyl/O-phospho-L-threonyl-[pyruvate, phosphate dikinase] + phosphate + H(+) = N(tele)-phospho-L-histidyl/L-threonyl-[pyruvate, phosphate dikinase] + diphosphate. Its function is as follows. Bifunctional serine/threonine kinase and phosphorylase involved in the regulation of the pyruvate, phosphate dikinase (PPDK) by catalyzing its phosphorylation/dephosphorylation. This is Putative pyruvate, phosphate dikinase regulatory protein from Citrifermentans bemidjiense (strain ATCC BAA-1014 / DSM 16622 / JCM 12645 / Bem) (Geobacter bemidjiensis).